Consider the following 288-residue polypeptide: Zinc finger protein ZAT9 (288 aa).

Residues 4–26 (YKCRVCFKSFVNGKALGGHMRSH) form a C2H2-type 1 zinc finger. Disordered stretches follow at residues 20 to 82 (GGHM…LTRK), 101 to 123 (SQLG…DTTT), and 189 to 210 (GGHR…QRSE). Residues 37–52 (PSQLSYETESDVSSSD) show a composition bias toward polar residues. C2H2-type zinc fingers lie at residues 173-195 (YKCE…RASH) and 224-246 (HECP…KRSH).

Its subcellular location is the nucleus. In terms of biological role, probable transcription factor that may be involved in stress responses. The polypeptide is Zinc finger protein ZAT9 (ZAT9) (Arabidopsis thaliana (Mouse-ear cress)).